Reading from the N-terminus, the 189-residue chain is UPF0398 protein LGAS_1023 (189 aa).

It belongs to the UPF0398 family.

In Lactobacillus gasseri (strain ATCC 33323 / DSM 20243 / BCRC 14619 / CIP 102991 / JCM 1131 / KCTC 3163 / NCIMB 11718 / NCTC 13722 / AM63), this protein is UPF0398 protein LGAS_1023.